Consider the following 561-residue polypeptide: Septation ring formation regulator EzrA (561 aa).

The Extracellular segment spans residues 1 to 3 (MWI). The chain crosses the membrane as a helical span at residues 4–22 (VVFSLLVLTVTFFVYGALR). Over 23–561 (RKAFYKRVDK…VLEKVQHLAG (539 aa)) the chain is Cytoplasmic. Coiled coils occupy residues 98–130 (RFQK…IQVL), 166–214 (AKVF…HLLK), and 251–465 (FAID…KLSD).

This sequence belongs to the EzrA family.

The protein localises to the cell membrane. Functionally, negative regulator of FtsZ ring formation; modulates the frequency and position of FtsZ ring formation. Inhibits FtsZ ring formation at polar sites. Interacts either with FtsZ or with one of its binding partners to promote depolymerization. In Halalkalibacterium halodurans (strain ATCC BAA-125 / DSM 18197 / FERM 7344 / JCM 9153 / C-125) (Bacillus halodurans), this protein is Septation ring formation regulator EzrA.